The chain runs to 483 residues: Myocilin (483 aa).

The first 18 residues, 1-18 (MPTAQLLLLACLLWGLEA), serve as a signal peptide directing secretion. The N-linked (GlcNAc...) asparagine glycan is linked to Asn-43. The stretch at 51–162 (GQAMSAIQDL…SQEVARLRRG (112 aa)) forms a coiled coil. The tract at residues 153–179 (SQEVARLRRGQCPQAHSSSQDVPAGSR) is disordered. Positions 223–482 (GCGELVWVGE…MVTYDIRLSK (260 aa)) constitute an Olfactomedin-like domain. Cys-224 and Cys-412 are disulfide-bonded. Positions 359, 407, 408, 456, and 457 each coordinate Ca(2+). The short motif at 481–483 (SKM) is the Microbody targeting signal element.

As to quaternary structure, homodimer (via N-terminus). Can also form higher oligomers. Interacts with OLFM3, FN1, NRCAM, GLDN and NFASC. Interacts (via N-terminus) with MYL2. Interacts with SFRP1, FRZB, FZD7, FZD10, FZD1 and WIF1; regulates Wnt signaling. Interacts with SNTA1; regulates muscle hypertrophy. Interacts with ERBB2 and ERBB3; activates ERBB2-ERBB3 signaling pathway. Interacts with SNCG; affects its secretion and its aggregation. N-glycosylated. In terms of processing, palmitoylated. Post-translationally, undergoes a calcium-dependent proteolytic cleavage at Arg-205 by CAPN2 in the endoplasmic reticulum. The result is the production of two fragments, one of 35 kDa containing the C-terminal olfactomedin-like domain, and another of 20 kDa containing the N-terminal leucine zipper-like domain. As to expression, expressed in optic nerve head, ciliary body and retina.

It localises to the secreted. It is found in the golgi apparatus. The protein localises to the cytoplasmic vesicle. The protein resides in the extracellular space. Its subcellular location is the extracellular matrix. It localises to the extracellular exosome. It is found in the mitochondrion. The protein localises to the mitochondrion intermembrane space. The protein resides in the mitochondrion inner membrane. Its subcellular location is the mitochondrion outer membrane. It localises to the rough endoplasmic reticulum. It is found in the cell projection. The protein localises to the cilium. The protein resides in the endoplasmic reticulum. In terms of biological role, secreted glycoprotein regulating the activation of different signaling pathways in adjacent cells to control different processes including cell adhesion, cell-matrix adhesion, cytoskeleton organization and cell migration. Promotes substrate adhesion, spreading and formation of focal contacts. Negatively regulates cell-matrix adhesion and stress fiber assembly through Rho protein signal transduction. Modulates the organization of actin cytoskeleton by stimulating the formation of stress fibers through interactions with components of Wnt signaling pathways. Promotes cell migration through activation of PTK2 and the downstream phosphatidylinositol 3-kinase signaling. Plays a role in bone formation and promotes osteoblast differentiation in a dose-dependent manner through mitogen-activated protein kinase signaling. Mediates myelination in the peripheral nervous system through ERBB2/ERBB3 signaling. Plays a role as a regulator of muscle hypertrophy through the components of dystrophin-associated protein complex. Involved in positive regulation of mitochondrial depolarization. Plays a role in neurite outgrowth. May participate in the obstruction of fluid outflow in the trabecular meshwork. The chain is Myocilin (MYOC) from Canis lupus familiaris (Dog).